The primary structure comprises 395 residues: Elongation factor Tu (395 aa).

In terms of domain architecture, tr-type G spans 10–204 (KPHVNIGTIG…VVDEYIPTPV (195 aa)). A G1 region spans residues 19–26 (GHVDHGKT). Residue 19-26 (GHVDHGKT) participates in GTP binding. T26 contacts Mg(2+). A G2 region spans residues 60–64 (GITIN). The tract at residues 81 to 84 (DAPG) is G3. GTP-binding positions include 81–85 (DAPGH) and 136–139 (NKTD). A G4 region spans residues 136–139 (NKTD). Residues 174–176 (SAL) are G5.

This sequence belongs to the TRAFAC class translation factor GTPase superfamily. Classic translation factor GTPase family. EF-Tu/EF-1A subfamily. Monomer.

The protein resides in the cytoplasm. It carries out the reaction GTP + H2O = GDP + phosphate + H(+). GTP hydrolase that promotes the GTP-dependent binding of aminoacyl-tRNA to the A-site of ribosomes during protein biosynthesis. In Lactiplantibacillus plantarum (strain ATCC BAA-793 / NCIMB 8826 / WCFS1) (Lactobacillus plantarum), this protein is Elongation factor Tu.